The chain runs to 857 residues: DNA mismatch repair protein MutS (857 aa).

Gly-608–Ser-615 contacts ATP.

Belongs to the DNA mismatch repair MutS family.

Its function is as follows. This protein is involved in the repair of mismatches in DNA. It is possible that it carries out the mismatch recognition step. This protein has a weak ATPase activity. The chain is DNA mismatch repair protein MutS from Lacticaseibacillus paracasei (strain ATCC 334 / BCRC 17002 / CCUG 31169 / CIP 107868 / KCTC 3260 / NRRL B-441) (Lactobacillus paracasei).